The following is a 922-amino-acid chain: 1,4-alpha-glucan-branching enzyme 1, chloroplastic/amyloplastic (922 aa).

A chloroplast-targeting transit peptide spans 1 to 47 (MVYTISGIRFPVLPSLHKSTLRCDRRASSHSFFLKNNSSSFSRTSLY). The segment at 83–130 (LENPDITSEDAQNLEDLTMKDGNKYNIDESTSSYREVGDEKGSVTSSS) is disordered. Residues 99-109 (LTMKDGNKYNI) show a composition bias toward basic and acidic residues. The Nucleophile role is filled by Asp-494. Glu-549 functions as the Proton donor in the catalytic mechanism. The tract at residues 870–922 (VESEPIELSVEEAESEPIERSVEEVESETTQQSVEVESETTQQSVEVESETTQ) is disordered. Positions 897–922 (ETTQQSVEVESETTQQSVEVESETTQ) are enriched in low complexity.

It belongs to the glycosyl hydrolase 13 family. GlgB subfamily. In terms of assembly, monomer. Expressed in roots, leaves, stipules, pods and flowers.

It localises to the plastid. Its subcellular location is the chloroplast. The protein localises to the amyloplast. The enzyme catalyses Transfers a segment of a (1-&gt;4)-alpha-D-glucan chain to a primary hydroxy group in a similar glucan chain.. It functions in the pathway glycan biosynthesis; starch biosynthesis. Its function is as follows. Catalyzes the formation of the alpha-1,6-glucosidic linkages in starch by scission of a 1,4-alpha-linked oligosaccharide from growing alpha-1,4-glucan chains and the subsequent attachment of the oligosaccharide to the alpha-1,6 position. May preferentially transfer short chains during branching. Responsible for the synthesis of about 75% of the amylopectin found in the starch granules of mature embryos. The chain is 1,4-alpha-glucan-branching enzyme 1, chloroplastic/amyloplastic (SBEI) from Pisum sativum (Garden pea).